Consider the following 1488-residue polypeptide: MIYRWLLLVSCLLLALLAQRGAAKSSSPKIAPPTKIDHKPSSLFYFEDTDTVLMNTVNGDLLRSVDAGETWSVVEGDDGGMKHHVLLIRQHPYDNKKAYALGPNGRHWVTTDQAKTWASFNIAEFPAIRHYPLVFHGGDSSKVIFQGEECAGRYCIVRSYYTTDDFATVKLLRESTGGCAWAVGHPQFAEDLNLAEEIKDRSFCVVPGLKVPLPHANRLVYSDDYFKGNAEGTETKLQEGRPVSGVISTAAVKKFIVAAAKSKGTEELALYVTVDAKNWHRAEFDGHRIEEDAYTMLESTNYSLQVDVLTSPRSGMGVLFTSNSNGTYFTRNIEHTNRNSEGMVDFEKIAGIQGIVLVNTVQNPEEVESGSAKKKITSRISFDDGRTFQPLKSDGENLHLHSVTALRNIGRVFSSPAPGLVMGIGNTGNHLQEYAECNLYISDDAGVTWRRAIKHPHKYEFGDQGAVVIAVRDEGRVDKINYSLDHGKEWASVELQHKIYPTMVTTTPDSTSLKFIVVGSLKESQDGEHVIYSIDFDGLHERKCEEDDFEKWPARLDEHGKPDCLMGHKQFYMRRRANANCFVDEEFKDPQPIFEACKCTAEDFECEYRRTEDGKGCVIPSPLTPPEGECKKPDDKFMGPSGWRLIPGDACIRDGGENLDKEIERSCKDASSPSTDGKIRVTLQLLEARDYAQYYYLERQSSSSGSDETIIMLSSEHEVYVTHDHGKTWERPLKGEEITRVYLHPYSSDVAFLLTDGKEGFWTEDRGHTFKPFQAPAPPTQDRFLQVMAFHPVHKDRLIWTGAVDCHSGDCHSDAFIKKGRGKNWEPLLSYVQKCEFESRETRPNSTNLVYCEQFEKQSKNGRLQLLSSDDFFNDNEVQFVDVINYATMSEFIIVASRQPENPDSLVASTSVDGRTFARAQFPPNVQVPVQTAYTVLESSTHAVFLHVTASSTEGGEYGPIIKSNSNGTSYVLSISAVNRNSLGYVDFEKAQGLEGVAVVNVVSNVADVSKKVPKKLKTMITHNDGAQWMLLPPPTKDADGKSFGCSVVAGKGTDDCSLHLHGYTERKDERDTFASGSAIGLMMAVGNVGDHLAGGDEADTFITNDGGISWKSVKKGKYMWEYGDSGSVIVIVPESKPTKTIHYSLDEGDTWEEFQFSDVEVRINDISTVPSDTSKNFLLWARLSNSEVQDKFATFNIDFSGVRPRPCLLDENQGNSDDYYIWEPKHPFQENNCLFGHSEQYHRKKPSAQCWNDWRESHVHSIGTNCTCTRADYECDYNYEPQSDGSCALVPGLPKPDAMEICKKDPDTIEYWEPTGYRRIPQTTCQGGLNLDHFVSKPCPNKEEEYKQKHGISGVGLFFAIVTPLAVAGAAGYYAYSKWDGKFGQIRLGESAGTSQSFLSRDSWLVTVPIAIVAGTVAVARALPLLVTSLWRGASGFIRLGRGRGYSRPYASRGSFAARRGDYTSIVDDEDELLGVEDAELDEDDEA.

Positions 1–23 are cleaved as a signal peptide; the sequence is MIYRWLLLVSCLLLALLAQRGAA. Over 24 to 1351 the chain is Lumenal; sequence KSSSPKIAPP…NKEEEYKQKH (1328 aa). One copy of the BNR 1 repeat lies at 63–72; the sequence is RSVDAGETWS. Residues Asn-301 and Asn-325 are each glycosylated (N-linked (GlcNAc...) asparagine). BNR repeat units lie at residues 380-389 and 440-450; these read ISFDDGRTFQ and YISDDAGVTWR. The N-linked (GlcNAc...) asparagine glycan is linked to Asn-481. BNR repeat units follow at residues 482–490 and 720–730; these read YSLDHGKEW and YVTHDHGKTWE. N-linked (GlcNAc...) asparagine glycosylation is found at Asn-845 and Asn-967. BNR repeat units lie at residues 1102–1112 and 1144–1153; these read FITNDGGISWK and YSLDEGDTWE. N-linked (GlcNAc...) asparagine glycosylation is present at Asn-1266. The helical transmembrane segment at 1352-1372 threads the bilayer; the sequence is GISGVGLFFAIVTPLAVAGAA. The Cytoplasmic portion of the chain corresponds to 1373–1405; the sequence is GYYAYSKWDGKFGQIRLGESAGTSQSFLSRDSW. The chain crosses the membrane as a helical span at residues 1406–1426; that stretch reads LVTVPIAIVAGTVAVARALPL. The Lumenal portion of the chain corresponds to 1427–1488; sequence LVTSLWRGAS…DAELDEDDEA (62 aa).

This sequence belongs to the VPS10-related sortilin family.

It localises to the golgi apparatus. The protein resides in the trans-Golgi network membrane. Its subcellular location is the prevacuolar compartment membrane. Its function is as follows. Functions as a sorting receptor in the Golgi compartment required for the intracellular sorting and delivery of soluble vacuolar proteins, like carboxypeptidase Y (CPY) and proteinase A. Executes multiple rounds of sorting by cycling between the late Golgi and a prevacuolar endosome-like compartment. In Aspergillus oryzae (strain ATCC 42149 / RIB 40) (Yellow koji mold), this protein is Vacuolar protein sorting/targeting protein 10 (vps10).